The following is a 268-amino-acid chain: Tryptophan synthase alpha chain (268 aa).

Catalysis depends on proton acceptor residues E49 and D60.

Belongs to the TrpA family. As to quaternary structure, tetramer of two alpha and two beta chains.

The enzyme catalyses (1S,2R)-1-C-(indol-3-yl)glycerol 3-phosphate + L-serine = D-glyceraldehyde 3-phosphate + L-tryptophan + H2O. The protein operates within amino-acid biosynthesis; L-tryptophan biosynthesis; L-tryptophan from chorismate: step 5/5. Functionally, the alpha subunit is responsible for the aldol cleavage of indoleglycerol phosphate to indole and glyceraldehyde 3-phosphate. The polypeptide is Tryptophan synthase alpha chain (Haemophilus influenzae (strain 86-028NP)).